The chain runs to 413 residues: Serine hydroxymethyltransferase (413 aa).

(6S)-5,6,7,8-tetrahydrofolate-binding positions include Leu-117 and 121–123; that span reads GHL. An N6-(pyridoxal phosphate)lysine modification is found at Lys-226. Residues Glu-239 and 349-351 contribute to the (6S)-5,6,7,8-tetrahydrofolate site; that span reads SPF.

The protein belongs to the SHMT family. As to quaternary structure, homodimer. It depends on pyridoxal 5'-phosphate as a cofactor.

The protein localises to the cytoplasm. The enzyme catalyses (6R)-5,10-methylene-5,6,7,8-tetrahydrofolate + glycine + H2O = (6S)-5,6,7,8-tetrahydrofolate + L-serine. The protein operates within one-carbon metabolism; tetrahydrofolate interconversion. It participates in amino-acid biosynthesis; glycine biosynthesis; glycine from L-serine: step 1/1. Its function is as follows. Catalyzes the reversible interconversion of serine and glycine with tetrahydrofolate (THF) serving as the one-carbon carrier. This reaction serves as the major source of one-carbon groups required for the biosynthesis of purines, thymidylate, methionine, and other important biomolecules. Also exhibits THF-independent aldolase activity toward beta-hydroxyamino acids, producing glycine and aldehydes, via a retro-aldol mechanism. The sequence is that of Serine hydroxymethyltransferase from Bacillus mycoides (strain KBAB4) (Bacillus weihenstephanensis).